Here is a 269-residue protein sequence, read N- to C-terminus: Ribosomal RNA small subunit methyltransferase A (269 aa).

S-adenosyl-L-methionine-binding residues include asparagine 20, leucine 22, glycine 47, glutamate 68, aspartate 90, and asparagine 110.

The protein belongs to the class I-like SAM-binding methyltransferase superfamily. rRNA adenine N(6)-methyltransferase family. RsmA subfamily.

It localises to the cytoplasm. The catalysed reaction is adenosine(1518)/adenosine(1519) in 16S rRNA + 4 S-adenosyl-L-methionine = N(6)-dimethyladenosine(1518)/N(6)-dimethyladenosine(1519) in 16S rRNA + 4 S-adenosyl-L-homocysteine + 4 H(+). Functionally, specifically dimethylates two adjacent adenosines (A1518 and A1519) in the loop of a conserved hairpin near the 3'-end of 16S rRNA in the 30S particle. May play a critical role in biogenesis of 30S subunits. This is Ribosomal RNA small subunit methyltransferase A from Chlorobium phaeobacteroides (strain DSM 266 / SMG 266 / 2430).